We begin with the raw amino-acid sequence, 120 residues long: UPF0231 protein YacL (120 aa).

Belongs to the UPF0231 family.

The protein is UPF0231 protein YacL of Escherichia fergusonii (strain ATCC 35469 / DSM 13698 / CCUG 18766 / IAM 14443 / JCM 21226 / LMG 7866 / NBRC 102419 / NCTC 12128 / CDC 0568-73).